A 40-amino-acid chain; its full sequence is Sulfur globule protein TR2 (40 aa).

To C.vinosum CV3. The protein envelope of the sulfur globules is composed of the three different proteins TR0, TR1 and TR2.

Structural protein of the sulfur globules, which are intracellular globules that serve for sulfur storage in purple sulfur bacteria. The polypeptide is Sulfur globule protein TR2 (Thiocapsa roseopersicina).